We begin with the raw amino-acid sequence, 273 residues long: MAIHLYKTSTPSTRKGAVDSQAKSNPRTKLIYGQHRCGKGRNARGIITARHRGGGHKRLYRKIDFRRNEKDISGRIVTIEYDPNRNAYICLIHYGDGEKRYILHPRGAIIGDTIVSGTEVPISMGNALPLTDMPLGTAIHNIEITLGKGGQLARAAGAVAKLIAKEGKSATLRLPSGEVRLISKNCSATVGQVGNVGANQKSLGRAGSKCWLGKRPVVRGVVMNPVDHPHGGGEGRAPIGRKKPTTPWGYPALGRRSRKRNKYSDIFILRRRK.

Disordered stretches follow at residues M1–S24 and N224–G254.

The protein belongs to the universal ribosomal protein uL2 family. Part of the 50S ribosomal subunit.

The protein resides in the plastid. Its subcellular location is the chloroplast. This Nymphaea alba (White water-lily) protein is Large ribosomal subunit protein uL2cz/uL2cy (rpl2-A).